Consider the following 116-residue polypeptide: Ribosome-binding factor A (116 aa).

The protein belongs to the RbfA family. In terms of assembly, monomer. Binds 30S ribosomal subunits, but not 50S ribosomal subunits or 70S ribosomes.

It localises to the cytoplasm. One of several proteins that assist in the late maturation steps of the functional core of the 30S ribosomal subunit. Associates with free 30S ribosomal subunits (but not with 30S subunits that are part of 70S ribosomes or polysomes). Required for efficient processing of 16S rRNA. May interact with the 5'-terminal helix region of 16S rRNA. The polypeptide is Ribosome-binding factor A (Malacoplasma penetrans (strain HF-2) (Mycoplasma penetrans)).